Consider the following 824-residue polypeptide: Leucine--tRNA ligase (824 aa).

Positions proline 42–histidine 52 match the 'HIGH' region motif. The 'KMSKS' region motif lies at lysine 581–serine 585. Lysine 584 is a binding site for ATP.

The protein belongs to the class-I aminoacyl-tRNA synthetase family.

It localises to the cytoplasm. It carries out the reaction tRNA(Leu) + L-leucine + ATP = L-leucyl-tRNA(Leu) + AMP + diphosphate. The polypeptide is Leucine--tRNA ligase (Geobacter sp. (strain M21)).